The primary structure comprises 127 residues: Small ribosomal subunit protein uS11 (127 aa).

This sequence belongs to the universal ribosomal protein uS11 family. Part of the 30S ribosomal subunit. Interacts with proteins S7 and S18. Binds to IF-3.

Its function is as follows. Located on the platform of the 30S subunit, it bridges several disparate RNA helices of the 16S rRNA. Forms part of the Shine-Dalgarno cleft in the 70S ribosome. This Streptococcus mutans serotype c (strain ATCC 700610 / UA159) protein is Small ribosomal subunit protein uS11.